The chain runs to 337 residues: Phenylalanine--tRNA ligase alpha subunit (337 aa).

Glu252 serves as a coordination point for Mg(2+).

It belongs to the class-II aminoacyl-tRNA synthetase family. Phe-tRNA synthetase alpha subunit type 1 subfamily. As to quaternary structure, tetramer of two alpha and two beta subunits. It depends on Mg(2+) as a cofactor.

The protein resides in the cytoplasm. The enzyme catalyses tRNA(Phe) + L-phenylalanine + ATP = L-phenylalanyl-tRNA(Phe) + AMP + diphosphate + H(+). The protein is Phenylalanine--tRNA ligase alpha subunit of Saccharophagus degradans (strain 2-40 / ATCC 43961 / DSM 17024).